A 459-amino-acid polypeptide reads, in one-letter code: tRNA modification GTPase MnmE (459 aa).

(6S)-5-formyl-5,6,7,8-tetrahydrofolate-binding residues include Arg22, Glu85, and Arg124. The TrmE-type G domain occupies Gly221–Phe380. Asn231 is a binding site for K(+). Residues Asn231 to Ser236, Thr250 to Thr256, and Asp275 to Gly278 contribute to the GTP site. Position 235 (Ser235) interacts with Mg(2+). Thr250, Val252, and Thr255 together coordinate K(+). Residue Thr256 participates in Mg(2+) binding. Lys459 lines the (6S)-5-formyl-5,6,7,8-tetrahydrofolate pocket.

Belongs to the TRAFAC class TrmE-Era-EngA-EngB-Septin-like GTPase superfamily. TrmE GTPase family. As to quaternary structure, homodimer. Heterotetramer of two MnmE and two MnmG subunits. K(+) serves as cofactor.

It localises to the cytoplasm. In terms of biological role, exhibits a very high intrinsic GTPase hydrolysis rate. Involved in the addition of a carboxymethylaminomethyl (cmnm) group at the wobble position (U34) of certain tRNAs, forming tRNA-cmnm(5)s(2)U34. This chain is tRNA modification GTPase MnmE, found in Staphylococcus aureus (strain bovine RF122 / ET3-1).